Here is a 404-residue protein sequence, read N- to C-terminus: MKLPIYLDYSATTPVDPRVAQKMADCLLVDGNFGNPASRSHVFGWKAEEAVENGRRQVAELINADPREIVWTSGATESDNLAIKGVAHFYQSKGKHIITSKIEHKAVLDTARQLEREGFEVTYLEPGEDGIVTPAQVEAVLRDDTILVSLMHVNNEVGSINDIAAIGELTRSRGVLFHVDAAQSAGKVEIDLQKLKVDLMSFSAHKAYGPKGIGALYVSRKPRVRLEAIIHGGGHERGMRSGTLPTHQIVGMGEAFAIAKQEMAAENQRIKALSDRFFKQVSDLEELYVNGSQTARVPHNLNLSFNYVEGESLLMSLKDIAVSSGSACTSASLEPSYVLRALGRNDELAHSSIRFSFGRFTTEEEVDYAAQKVCEAVNKLRELSPLWDMYKDGVDISKIEWAAH.

Residues 75-76 (AT), Asn-155, Gln-183, and 203-205 (SAH) each bind pyridoxal 5'-phosphate. An N6-(pyridoxal phosphate)lysine modification is found at Lys-206. Residue Thr-243 participates in pyridoxal 5'-phosphate binding. Cys-328 (cysteine persulfide intermediate) is an active-site residue. Cys-328 contributes to the [2Fe-2S] cluster binding site.

This sequence belongs to the class-V pyridoxal-phosphate-dependent aminotransferase family. NifS/IscS subfamily. As to quaternary structure, homodimer. Forms a heterotetramer with IscU, interacts with other sulfur acceptors. Pyridoxal 5'-phosphate serves as cofactor.

The protein localises to the cytoplasm. The enzyme catalyses (sulfur carrier)-H + L-cysteine = (sulfur carrier)-SH + L-alanine. It participates in cofactor biosynthesis; iron-sulfur cluster biosynthesis. In terms of biological role, master enzyme that delivers sulfur to a number of partners involved in Fe-S cluster assembly, tRNA modification or cofactor biosynthesis. Catalyzes the removal of elemental sulfur atoms from cysteine to produce alanine. Functions as a sulfur delivery protein for Fe-S cluster synthesis onto IscU, an Fe-S scaffold assembly protein, as well as other S acceptor proteins. The chain is Cysteine desulfurase IscS from Pseudomonas putida (strain W619).